We begin with the raw amino-acid sequence, 373 residues long: uncharacterized protein (373 aa).

The protein belongs to the glycosyltransferase 28 family.

This is an uncharacterized protein from Bacillus subtilis (strain 168).